Reading from the N-terminus, the 432-residue chain is Glutamate-1-semialdehyde 2,1-aminomutase (432 aa).

At Lys265 the chain carries N6-(pyridoxal phosphate)lysine.

It belongs to the class-III pyridoxal-phosphate-dependent aminotransferase family. HemL subfamily. Homodimer. The cofactor is pyridoxal 5'-phosphate.

Its subcellular location is the cytoplasm. It catalyses the reaction (S)-4-amino-5-oxopentanoate = 5-aminolevulinate. The protein operates within porphyrin-containing compound metabolism; protoporphyrin-IX biosynthesis; 5-aminolevulinate from L-glutamyl-tRNA(Glu): step 2/2. The protein is Glutamate-1-semialdehyde 2,1-aminomutase of Photobacterium profundum (strain SS9).